Here is a 201-residue protein sequence, read N- to C-terminus: 7-methyl-GTP pyrophosphatase (201 aa).

Residue aspartate 73 is the Proton acceptor of the active site.

It belongs to the Maf family. YceF subfamily. A divalent metal cation is required as a cofactor.

It is found in the cytoplasm. The enzyme catalyses N(7)-methyl-GTP + H2O = N(7)-methyl-GMP + diphosphate + H(+). Its function is as follows. Nucleoside triphosphate pyrophosphatase that hydrolyzes 7-methyl-GTP (m(7)GTP). May have a dual role in cell division arrest and in preventing the incorporation of modified nucleotides into cellular nucleic acids. The chain is 7-methyl-GTP pyrophosphatase from Thiobacillus denitrificans (strain ATCC 25259 / T1).